Consider the following 305-residue polypeptide: Maximins-S type B/C (305 aa).

A signal peptide spans 1-18 (MNFNYFILVLFFITSGHA). Propeptides lie at residues 19–35 (KSET…HIKR) and 52–65 (SAEE…LVTR). Asn83 is subject to Asparagine amide. Positions 87-100 (SAEEQDLAEHLVTR) are excised as a propeptide. At Asn118 the chain carries Asparagine amide. A propeptide spanning residues 122–135 (SAEEQDLAEDLVTR) is cleaved from the precursor. Lys153 is subject to Lysine amide. The propeptide occupies 157–170 (SAEDQDLAEDLVTR). An Asparagine amide modification is found at Asn188. A propeptide spanning residues 192-205 (SAEEQDLAEHLVTR) is cleaved from the precursor. Asn223 carries the post-translational modification Asparagine amide. A propeptide spanning residues 227-240 (SAEEQDLSEDLVTR) is cleaved from the precursor. The residue at position 258 (Asn258) is an Asparagine amide. The propeptide occupies 262–275 (SAEEQDLVEDLVTR). The residue at position 293 (Lys293) is a Lysine amide. Residues 297 to 305 (SAEQEKDMK) constitute a propeptide that is removed on maturation.

This sequence belongs to the maximin-S family. Expressed by the skin dorsal glands.

The protein resides in the secreted. Its function is as follows. Maximin-S1 has no antimicrobial activity. Has no hemolytic activity. Maximin-S2 has an activity against mycoplasma but has no activity against common Gram-positive and Gram-negative bacteria nor fungi. Has no hemolytic activity. Functionally, maximin-S3 has an activity against mycoplasma but has no activity against common Gram-positive and Gram-negative bacteria nor fungi. Has no hemolytic activity. In terms of biological role, maximin-S4 has an activity against mycoplasma but has no activity against common Gram-positive and Gram-negative bacteria nor fungi. Has no hemolytic activity. Its function is as follows. Maximin-S5 has an activity against mycoplasma but has no activity against common Gram-positive and Gram-negative bacteria nor fungi. Has no hemolytic activity. In Bombina maxima (Giant fire-bellied toad), this protein is Maximins-S type B/C.